A 137-amino-acid chain; its full sequence is Ribosomal RNA small subunit methyltransferase G (137 aa).

Residues G75, F80, and A126–E127 each bind S-adenosyl-L-methionine.

It belongs to the methyltransferase superfamily. RNA methyltransferase RsmG family.

It localises to the cytoplasm. Functionally, specifically methylates the N7 position of a guanine in 16S rRNA. This chain is Ribosomal RNA small subunit methyltransferase G, found in Mycoplasma mycoides subsp. mycoides SC (strain CCUG 32753 / NCTC 10114 / PG1).